A 360-amino-acid chain; its full sequence is Phospho-N-acetylmuramoyl-pentapeptide-transferase (360 aa).

The next 10 membrane-spanning stretches (helical) occupy residues 21–41 (YVTF…LWWG), 74–94 (MGGL…GDLG), 97–117 (YVWV…IDDY), 134–154 (YILQ…SAGS), 168–188 (VMPQ…VGSS), 199–219 (GLAI…AYLS), 236–256 (SGEL…FLWF), 263–283 (VFMG…IAVL), 288–308 (ILLV…ILQV), and 338–358 (VIVR…ATLK).

It belongs to the glycosyltransferase 4 family. MraY subfamily. It depends on Mg(2+) as a cofactor.

Its subcellular location is the cell inner membrane. It carries out the reaction UDP-N-acetyl-alpha-D-muramoyl-L-alanyl-gamma-D-glutamyl-meso-2,6-diaminopimeloyl-D-alanyl-D-alanine + di-trans,octa-cis-undecaprenyl phosphate = di-trans,octa-cis-undecaprenyl diphospho-N-acetyl-alpha-D-muramoyl-L-alanyl-D-glutamyl-meso-2,6-diaminopimeloyl-D-alanyl-D-alanine + UMP. Its pathway is cell wall biogenesis; peptidoglycan biosynthesis. Catalyzes the initial step of the lipid cycle reactions in the biosynthesis of the cell wall peptidoglycan: transfers peptidoglycan precursor phospho-MurNAc-pentapeptide from UDP-MurNAc-pentapeptide onto the lipid carrier undecaprenyl phosphate, yielding undecaprenyl-pyrophosphoryl-MurNAc-pentapeptide, known as lipid I. The chain is Phospho-N-acetylmuramoyl-pentapeptide-transferase from Shewanella loihica (strain ATCC BAA-1088 / PV-4).